Reading from the N-terminus, the 239-residue chain is BURP domain-containing protein 6 (239 aa).

The N-terminal stretch at methionine 1–serine 19 is a signal peptide. Residues phenylalanine 28 to asparagine 239 form the BURP domain.

In terms of tissue distribution, expressed in leaves and shoot.

This chain is BURP domain-containing protein 6 (BURP6), found in Oryza sativa subsp. japonica (Rice).